We begin with the raw amino-acid sequence, 255 residues long: MTSGLILTERKNNVLWVTLNRPKKFNALTRQMFLDLCTVFNDAADDDDIAFVVFTGGKGKYYCAGSDFSPAELSTLTDIQEHGYKLFVDILIAFPKPIIALVNGHAVGVSVTMLGVMDAVIAIDTATFATPFADIGVCPEACSSYTLPRIMGHQKAAALMMFSEKFTAHEAHIAGLVTQILPAATFEKDAKKIIDRYSKLSPITMKVAKELMRTTQIKDELLTVNRKEQVHLNGMFSHEDTIARLTAKFVKPSKI.

Positions 253 to 255 (SKI) match the Microbody targeting signal motif.

This sequence belongs to the enoyl-CoA hydratase/isomerase family.

It localises to the peroxisome. This is an uncharacterized protein from Caenorhabditis elegans.